The chain runs to 954 residues: Isoleucine--tRNA ligase (954 aa).

Positions 58–68 match the 'HIGH' region motif; sequence PYANGDIHIGH. L-isoleucyl-5'-AMP is bound at residue E572. A 'KMSKS' region motif is present at residues 613–617; sequence KMSKS. K616 serves as a coordination point for ATP. Residues C917, C920, C937, and C940 each contribute to the Zn(2+) site.

The protein belongs to the class-I aminoacyl-tRNA synthetase family. IleS type 1 subfamily. In terms of assembly, monomer. The cofactor is Zn(2+).

The protein resides in the cytoplasm. The enzyme catalyses tRNA(Ile) + L-isoleucine + ATP = L-isoleucyl-tRNA(Ile) + AMP + diphosphate. Functionally, catalyzes the attachment of isoleucine to tRNA(Ile). As IleRS can inadvertently accommodate and process structurally similar amino acids such as valine, to avoid such errors it has two additional distinct tRNA(Ile)-dependent editing activities. One activity is designated as 'pretransfer' editing and involves the hydrolysis of activated Val-AMP. The other activity is designated 'posttransfer' editing and involves deacylation of mischarged Val-tRNA(Ile). This chain is Isoleucine--tRNA ligase, found in Photobacterium profundum (strain SS9).